The primary structure comprises 818 residues: Beta-glucosidase (818 aa).

Residue D222 is part of the active site. In terms of domain architecture, PA14 spans 386–538; sequence VFSGEMTVEY…GDAGIAEAVE (153 aa).

Belongs to the glycosyl hydrolase 3 family.

The protein localises to the cytoplasm. It catalyses the reaction Hydrolysis of terminal, non-reducing beta-D-glucosyl residues with release of beta-D-glucose.. Functionally, involved in modifying a vir-inducing plant signal molecule. Hydrolyzes coniferin but not cellobiose. The polypeptide is Beta-glucosidase (cbg-1) (Rhizobium radiobacter (Agrobacterium tumefaciens)).